The sequence spans 508 residues: Purine-cytosine permease fcyB (508 aa).

The Cytoplasmic portion of the chain corresponds to Met1–Asn72. A helical membrane pass occupies residues Ile73 to Gly93. The Extracellular segment spans residues Lys94 to Ala104. Residues Ile105–Phe125 traverse the membrane as a helical segment. Over Gly126–Gly147 the chain is Cytoplasmic. Residues Phe148–Ala168 traverse the membrane as a helical segment. The Extracellular portion of the chain corresponds to Gln169–Asp177. The chain crosses the membrane as a helical span at residues Val178 to Gly198. Residues Tyr199–Lys200 are Cytoplasmic-facing. The chain crosses the membrane as a helical span at residues Val201–Leu221. At Gly222–Gly243 the chain is on the extracellular side. The helical transmembrane segment at Ser244–Ala264 threads the bilayer. The Cytoplasmic portion of the chain corresponds to Asp265–Lys278. Residues Ile279 to Val299 traverse the membrane as a helical segment. At Ala300–Gly323 the chain is on the extracellular side. A helical transmembrane segment spans residues Leu324–Ala344. At Leu345–Arg374 the chain is on the cytoplasmic side. Residues Phe375–His395 traverse the membrane as a helical segment. Residues Phe396–Met404 lie on the Extracellular side of the membrane. The chain crosses the membrane as a helical span at residues Asn405–Phe425. Over Lys426–Lys442 the chain is Cytoplasmic. Residues Leu443–Gly463 traverse the membrane as a helical segment. The Extracellular segment spans residues Met464–Ala477. The helical transmembrane segment at Ala478 to Leu498 threads the bilayer. Topologically, residues Arg499–Arg508 are cytoplasmic.

Belongs to the purine-cytosine permease (2.A.39) family.

It localises to the cell membrane. This permease has a broad specificity towards purines, and also transports cytosine, but neither uracil nor thymine. Contributes very little in purine uptake. Its major role may be the uptake of cytosine. This Emericella nidulans (strain FGSC A4 / ATCC 38163 / CBS 112.46 / NRRL 194 / M139) (Aspergillus nidulans) protein is Purine-cytosine permease fcyB (fcyB).